The chain runs to 583 residues: 2-succinyl-5-enolpyruvyl-6-hydroxy-3-cyclohexene-1-carboxylate synthase (583 aa).

It belongs to the TPP enzyme family. MenD subfamily. Homodimer. Requires Mg(2+) as cofactor. Mn(2+) serves as cofactor. It depends on thiamine diphosphate as a cofactor.

The catalysed reaction is isochorismate + 2-oxoglutarate + H(+) = 5-enolpyruvoyl-6-hydroxy-2-succinyl-cyclohex-3-ene-1-carboxylate + CO2. It functions in the pathway quinol/quinone metabolism; 1,4-dihydroxy-2-naphthoate biosynthesis; 1,4-dihydroxy-2-naphthoate from chorismate: step 2/7. The protein operates within cofactor biosynthesis; phylloquinone biosynthesis. Functionally, catalyzes the thiamine diphosphate-dependent decarboxylation of 2-oxoglutarate and the subsequent addition of the resulting succinic semialdehyde-thiamine pyrophosphate anion to isochorismate to yield 2-succinyl-5-enolpyruvyl-6-hydroxy-3-cyclohexene-1-carboxylate (SEPHCHC). The protein is 2-succinyl-5-enolpyruvyl-6-hydroxy-3-cyclohexene-1-carboxylate synthase of Trichormus variabilis (strain ATCC 29413 / PCC 7937) (Anabaena variabilis).